The primary structure comprises 1003 residues: Calcium-transporting ATPase sarcoplasmic/endoplasmic reticulum type (1003 aa).

Residues 1–59 (MEDAHAKKWEEVVDYFGVDPERGLALEQVKKNQEKYGPNELPAEEGKSLLTLILEQFDD) are Cytoplasmic-facing. A helical membrane pass occupies residues 60–78 (LLVKILLLAAIISLVLALF). Over 79–89 (EEHDDEAEQLT) the chain is Extracellular. A helical transmembrane segment spans residues 90–110 (AYVEPFVILLILIANAVVGVW). At 111-262 (QEKNAESAIE…QQKLDEFGEQ (152 aa)) the chain is on the cytoplasmic side. The chain crosses the membrane as a helical span at residues 263–282 (LSKVISVICVAVWAINIGHF). Topologically, residues 283–300 (NDPAHGGSWIKGAIYYFK) are extracellular. Residues 301 to 318 (IAVALAVAAIPEGLPAVI) form a helical membrane-spanning segment. The Cytoplasmic segment spans residues 319–775 (TTCLALGTRR…RYLISSNIGE (457 aa)). The active-site 4-aspartylphosphate intermediate is the Asp-354. Residue Lys-519 participates in ATP binding. Residues 776 to 799 (VVSIFLTAALGLPEALIPVQLLWV) form a helical membrane-spanning segment. The Extracellular portion of the chain corresponds to 800–840 (NLVTDGLPATALGFNPPDLDIMNKPPRRADEGLITGWLFFR). The chain crosses the membrane as a helical span at residues 841–863 (YMAIGTYVGAATVGAAAHWFMMS). Over 864 to 898 (PTGPGLNFYQLSHHLQCTPENEYFEGIDCEIFSDP) the chain is Cytoplasmic. Residues 899 to 917 (HPMTMALSVLVTIEMLNAI) traverse the membrane as a helical segment. Topologically, residues 918-934 (NSLSENQSLLVMPPWSN) are extracellular. Residues 935–954 (IWLISAICLSMTLHFVILYV) form a helical membrane-spanning segment. The Cytoplasmic segment spans residues 955–1003 (EILSTVFQICPLTLTEWIVVLKISFPVLLLDEVLKFVARKYTDEFSFIK).

It belongs to the cation transport ATPase (P-type) (TC 3.A.3) family.

It is found in the sarcoplasmic reticulum membrane. The enzyme catalyses Ca(2+)(in) + ATP + H2O = Ca(2+)(out) + ADP + phosphate + H(+). This magnesium-dependent enzyme catalyzes the hydrolysis of ATP coupled with the transport of the calcium. This is Calcium-transporting ATPase sarcoplasmic/endoplasmic reticulum type from Artemia franciscana (Brine shrimp).